A 145-amino-acid chain; its full sequence is Peptide methionine sulfoxide reductase MsrB (145 aa).

Residues Ser4–Tyr127 form the MsrB domain. The active-site Nucleophile is the Cys116.

The protein belongs to the MsrB Met sulfoxide reductase family.

It carries out the reaction L-methionyl-[protein] + [thioredoxin]-disulfide + H2O = L-methionyl-(R)-S-oxide-[protein] + [thioredoxin]-dithiol. In Streptococcus pyogenes serotype M6 (strain ATCC BAA-946 / MGAS10394), this protein is Peptide methionine sulfoxide reductase MsrB.